The primary structure comprises 133 residues: NADPH-dependent 7-cyano-7-deazaguanine reductase (133 aa).

Residue Cys49 is the Thioimide intermediate of the active site. The Proton donor role is filled by Asp56. Substrate is bound by residues Ile71–Leu73 and His90–Glu91.

It belongs to the GTP cyclohydrolase I family. QueF type 1 subfamily.

The protein localises to the cytoplasm. It catalyses the reaction 7-aminomethyl-7-carbaguanine + 2 NADP(+) = 7-cyano-7-deazaguanine + 2 NADPH + 3 H(+). Its pathway is tRNA modification; tRNA-queuosine biosynthesis. Its function is as follows. Catalyzes the NADPH-dependent reduction of 7-cyano-7-deazaguanine (preQ0) to 7-aminomethyl-7-deazaguanine (preQ1). The polypeptide is NADPH-dependent 7-cyano-7-deazaguanine reductase (Leptospira borgpetersenii serovar Hardjo-bovis (strain JB197)).